The sequence spans 77 residues: Small ribosomal subunit protein bS20 (77 aa).

It belongs to the bacterial ribosomal protein bS20 family.

Binds directly to 16S ribosomal RNA. This is Small ribosomal subunit protein bS20 from Streptococcus agalactiae serotype Ia (strain ATCC 27591 / A909 / CDC SS700).